Consider the following 269-residue polypeptide: Diadenylate cyclase (269 aa).

The DAC domain maps to 109–266; it reads RSGIYDLFAN…GGKMILEIDP (158 aa).

Belongs to the adenylate cyclase family. DacZ subfamily. Mn(2+) serves as cofactor.

The enzyme catalyses 2 ATP = 3',3'-c-di-AMP + 2 diphosphate. Functionally, diadenylate cyclase that catalyzes the condensation of 2 ATP molecules into cyclic di-AMP (c-di-AMP). c-di-AMP is a second messenger for intracellular signal transduction involved in the control of important regulatory processes such as osmoregulation. Is essential for H.volcanii. Overexpression of DacZ leads to cell death, suggesting the need for tight regulation of c-di-AMP levels. Cannot use GTP as substrate. The polypeptide is Diadenylate cyclase (Haloferax volcanii (strain ATCC 29605 / DSM 3757 / JCM 8879 / NBRC 14742 / NCIMB 2012 / VKM B-1768 / DS2) (Halobacterium volcanii)).